We begin with the raw amino-acid sequence, 1205 residues long: Plasma membrane calcium-transporting ATPase 4 (1205 aa).

Over 1-100 (MTNPPGQSVS…KTFLELVWEA (100 aa)) the chain is Cytoplasmic. The helical transmembrane segment at 101-121 (LQDVTLIILEIAAIISLVLSF) threads the bilayer. Topologically, residues 122 to 147 (YRPPGGDNEICGHIASSPEEEEEGET) are extracellular. Residues 148-168 (GWIEGAAILASVIIVVLVTAF) traverse the membrane as a helical segment. Residues 169–369 (NDWSKEKQFR…LAVQIGKAGL (201 aa)) are Cytoplasmic-facing. The disordered stretch occupies residues 294-318 (DDDDKKKKGKKQGAPENRNKAKTQD). Residues serine 329 and serine 335 each carry the phosphoserine modification. Residues 370–390 (IMSVLTVVILILYFVVDNFVI) form a helical membrane-spanning segment. At 391 to 409 (QRREWLPECTPVYIQYFVK) the chain is on the extracellular side. A helical membrane pass occupies residues 410–430 (FFIIGVTVLVVAVPEGLPLAV). Residues 431-844 (TISLAYSVKK…RNVYDSISKF (414 aa)) are Cytoplasmic-facing. Aspartate 466 functions as the 4-aspartylphosphate intermediate in the catalytic mechanism. Mg(2+) contacts are provided by aspartate 786 and aspartate 790. The chain crosses the membrane as a helical span at residues 845–865 (LQFQLTVNVVAVIVAFTGACI). Residues 866 to 872 (TQDSPLK) lie on the Extracellular side of the membrane. The chain crosses the membrane as a helical span at residues 873–893 (AVQMLWVNLIMDTFASLALAT). At 894 to 919 (EPPTESLLRRRPYGRNKPLISRTMMK) the chain is on the cytoplasmic side. Residues 920 to 942 (NILGHAVYQLLIVFLLVFAGDTL) traverse the membrane as a helical segment. The Extracellular portion of the chain corresponds to 943–956 (FDIDSGRKAPLNSP). Residues 957–979 (PSQHYTIVFNTFVLMQLFNEINA) form a helical membrane-spanning segment. At 980–995 (RKIHGEKNVFAGVYRN) the chain is on the cytoplasmic side. Residues 996–1016 (IIFCTVVLGTFFCQIMIVELG) traverse the membrane as a helical segment. The Extracellular portion of the chain corresponds to 1017-1029 (GKPFSCTSLTMEQ). A helical transmembrane segment spans residues 1030 to 1050 (WMWCLFIGIGELLWGQVISAI). At 1051-1205 (PTKSLKFLKE…SPLPSLETPV (155 aa)) the chain is on the cytoplasmic side. Serine 1065 and serine 1071 each carry phosphoserine. Arginine 1072 bears the Omega-N-methylarginine mark. The segment at 1087–1104 (LRRGQILWVRGLNRIQTQ) is calmodulin-binding subdomain A. Phosphothreonine; by PKC is present on threonine 1103. The interval 1105–1114 (IRVVKLFHNN) is calmodulin-binding subdomain B. The residue at position 1145 (serine 1145) is a Phosphoserine.

The protein belongs to the cation transport ATPase (P-type) (TC 3.A.3) family. Type IIB subfamily. In terms of assembly, interacts with PDZD11. Interacts with SLC35G1 and STIM1. Interacts with calmodulin. Specifically expressed by sperm in testis (at protein level).

The protein resides in the membrane. The protein localises to the cell projection. It is found in the cilium. Its subcellular location is the flagellum membrane. It catalyses the reaction Ca(2+)(in) + ATP + H2O = Ca(2+)(out) + ADP + phosphate + H(+). Its activity is regulated as follows. Activated by calcium/calmodulin. Its function is as follows. Calcium/calmodulin-regulated and magnesium-dependent enzyme that catalyzes the hydrolysis of ATP coupled with the transport of calcium out of the cell. By regulating sperm cell calcium homeostasis, may play a role in sperm motility. The chain is Plasma membrane calcium-transporting ATPase 4 from Mus musculus (Mouse).